We begin with the raw amino-acid sequence, 396 residues long: Flavohemoprotein (396 aa).

One can recognise a Globin domain in the interval 1–136 (MLDNHTIAIV…LANVFIQRED (136 aa)). His-85 provides a ligand contact to heme b. Catalysis depends on charge relay system residues Tyr-95 and Glu-135. Positions 147 to 396 (GGWSGVRPFR…YECFGPHKVV (250 aa)) are reductase. Positions 150–255 (SGVRPFRIVN…AAPHGDFFLD (106 aa)) constitute an FAD-binding FR-type domain. FAD-binding positions include Tyr-188 and 204-207 (RQYS). Position 268-273 (268-273 (GVGQTP)) interacts with NADP(+). 389–392 (CFGP) provides a ligand contact to FAD.

Belongs to the globin family. Two-domain flavohemoproteins subfamily. It in the C-terminal section; belongs to the flavoprotein pyridine nucleotide cytochrome reductase family. It depends on heme b as a cofactor. Requires FAD as cofactor.

The catalysed reaction is 2 nitric oxide + NADPH + 2 O2 = 2 nitrate + NADP(+) + H(+). It carries out the reaction 2 nitric oxide + NADH + 2 O2 = 2 nitrate + NAD(+) + H(+). Functionally, is involved in NO detoxification in an aerobic process, termed nitric oxide dioxygenase (NOD) reaction that utilizes O(2) and NAD(P)H to convert NO to nitrate, which protects the bacterium from various noxious nitrogen compounds. Therefore, plays a central role in the inducible response to nitrosative stress. This is Flavohemoprotein from Pectobacterium atrosepticum (strain SCRI 1043 / ATCC BAA-672) (Erwinia carotovora subsp. atroseptica).